The sequence spans 215 residues: RWD domain-containing protein C1393.09c (215 aa).

The 108-residue stretch at 7–114 (EEREILESIY…SVAKEETNAI (108 aa)) folds into the RWD domain.

The protein localises to the cytoplasm. It localises to the nucleus. This chain is RWD domain-containing protein C1393.09c, found in Schizosaccharomyces pombe (strain 972 / ATCC 24843) (Fission yeast).